Reading from the N-terminus, the 254-residue chain is uncharacterized protein (254 aa).

The ABC transporter domain maps to 6-239 (LSVDGVEFAY…NIKAVYGVDA (234 aa)). 38–45 (GVNGAGKS) provides a ligand contact to ATP.

It belongs to the ABC transporter superfamily.

This is an uncharacterized protein from Methanocaldococcus jannaschii (strain ATCC 43067 / DSM 2661 / JAL-1 / JCM 10045 / NBRC 100440) (Methanococcus jannaschii).